The chain runs to 328 residues: Flotillin-like protein FloA (328 aa).

2 helical membrane-spanning segments follow: residues 1–21 (MFGLGIIVIAVIIVIALLVLF) and 26–46 (VGLWISAIAAGVKVGIGTLVG).

Belongs to the flotillin-like FloA family. In terms of assembly, homooligomerizes.

Its subcellular location is the cell membrane. The protein localises to the membrane raft. Its function is as follows. Found in functional membrane microdomains (FMM) that may be equivalent to eukaryotic membrane rafts. FMMs are highly dynamic and increase in number as cells age. Flotillins are thought to be important factors in membrane fluidity. This Staphylococcus haemolyticus (strain JCSC1435) protein is Flotillin-like protein FloA.